A 160-amino-acid chain; its full sequence is Cytochrome b6-f complex subunit 4 (160 aa).

3 helical membrane-spanning segments follow: residues 36-56 (LLYMFPVVILGTFALSISLAV), 95-115 (LLGVLCMAAVPVGLITVPFIE), and 131-151 (TLFLFGTATAVWLGIGAALPI).

The protein belongs to the cytochrome b family. PetD subfamily. In terms of assembly, the 4 large subunits of the cytochrome b6-f complex are cytochrome b6, subunit IV (17 kDa polypeptide, petD), cytochrome f and the Rieske protein, while the 4 small subunits are petG, petL, petM and petN. The complex functions as a dimer.

It is found in the plastid. It localises to the chloroplast thylakoid membrane. In terms of biological role, component of the cytochrome b6-f complex, which mediates electron transfer between photosystem II (PSII) and photosystem I (PSI), cyclic electron flow around PSI, and state transitions. The protein is Cytochrome b6-f complex subunit 4 of Oltmannsiellopsis viridis (Marine flagellate).